The primary structure comprises 693 residues: Zinc finger BED domain-containing protein 5 (693 aa).

A BED-type zinc finger spans residues 108-164 (RKYDESYLSFGFTYFGNRDAPHAQCVLCKKILSNSSLAPSKLRRHLETKHAAYKDKD). Zn(2+)-binding residues include Cys-132, Cys-135, His-152, and His-157.

The chain is Zinc finger BED domain-containing protein 5 (ZBED5) from Homo sapiens (Human).